The sequence spans 473 residues: Dol-P-Glc:Glc(2)Man(9)GlcNAc(2)-PP-Dol alpha-1,2-glucosyltransferase (473 aa).

Residues 1–6 lie on the Cytoplasmic side of the membrane; the sequence is MAQLEG. The helical transmembrane segment at 7–27 threads the bilayer; sequence YYFSAALSCTFLVSCLLFSAF. The Extracellular segment spans residues 28–64; the sequence is SRALREPYMDEIFHLPQAQRYCEGHFSLSQWDPMITT. A helical transmembrane segment spans residues 65-85; the sequence is LPGLYLVSIGVIKPAIWIFGW. The Cytoplasmic portion of the chain corresponds to 86–97; that stretch reads SEHVVCSIGMLR. Residues 98–118 traverse the membrane as a helical segment; it reads FVNLLFSVGNFYLLYLLFCKV. At 119–130 the chain is on the extracellular side; the sequence is QPRNKAASSIQR. 2 helical membrane-spanning segments follow: residues 131–151 and 152–172; these read VLST…FLYY and TEAG…YGNH. Residues 173–175 are Extracellular-facing; sequence KTS. A helical transmembrane segment spans residues 176–196; that stretch reads AFLGFCGFMFRQTNIIWAVFC. Residues 197 to 249 lie on the Cytoplasmic side of the membrane; sequence AGNVIAQKLTEAWKTELQKKEDRLPPIKGPFAEFRKILQFLLAYSMSFKNLSM. The chain crosses the membrane as a helical span at residues 250–270; sequence LLLLTWPYILLGFLFCAFVVV. Over 271–283 the chain is Extracellular; that stretch reads NGGIVIGDRSSHE. The chain crosses the membrane as a helical span at residues 284–304; sequence ACLHFPQLFYFFSFTLFFSFP. At 305–323 the chain is on the cytoplasmic side; that stretch reads HLLSPSKIKTFLSLVWKRR. A helical transmembrane segment spans residues 324–344; sequence ILFFVVTLVSVFLVWKFTYAH. The Extracellular portion of the chain corresponds to 345 to 367; that stretch reads KYLLADNRHYTFYVWKRVFQRYE. The chain crosses the membrane as a helical span at residues 368–388; the sequence is TVKYLLVPAYIFAGWSIADSL. Residues 389–392 are Cytoplasmic-facing; sequence KSKS. The chain crosses the membrane as a helical span at residues 393–413; the sequence is IFWNLMFFICLFTVIVPQKLL. The Extracellular portion of the chain corresponds to 414–436; sequence EFRYFILPYVIYRLNIPLPPTSR. A helical transmembrane segment spans residues 437-457; sequence LICELSCYAVVNFITFFIFLN. At 458 to 473 the chain is on the cytoplasmic side; the sequence is KTFQWPNSQDIQRFMW.

The protein belongs to the ALG10 glucosyltransferase family.

It is found in the endoplasmic reticulum membrane. The catalysed reaction is an alpha-D-Glc-(1-&gt;3)-alpha-D-Glc-(1-&gt;3)-alpha-D-Man-(1-&gt;2)-alpha-D-Man-(1-&gt;2)-alpha-D-Man-(1-&gt;3)-[alpha-D-Man-(1-&gt;2)-alpha-D-Man-(1-&gt;3)-[alpha-D-Man-(1-&gt;2)-alpha-D-Man-(1-&gt;6)]-alpha-D-Man-(1-&gt;6)]-beta-D-Man-(1-&gt;4)-beta-D-GlcNAc-(1-&gt;4)-alpha-D-GlcNAc-diphospho-di-trans,poly-cis-dolichol + a di-trans,poly-cis-dolichyl beta-D-glucosyl phosphate = a alpha-D-Glc-(1-&gt;2)-alpha-D-Glc-(1-&gt;3)-alpha-D-Glc-(1-&gt;3)-alpha-D-Man-(1-&gt;2)-alpha-D-Man-(1-&gt;2)-alpha-D-Man-(1-&gt;3)-[alpha-D-Man-(1-&gt;2)-alpha-D-Man-(1-&gt;3)-[alpha-D-Man-(1-&gt;2)-alpha-D-Man-(1-&gt;6)]-alpha-D-Man-(1-&gt;6)]-beta-D-Man-(1-&gt;4)-beta-D-GlcNAc-(1-&gt;4)-alpha-D-GlcNAc-diphospho-di-trans,poly-cis-dolichol + a di-trans,poly-cis-dolichyl phosphate + H(+). It functions in the pathway protein modification; protein glycosylation. Dol-P-Glc:Glc(2)Man(9)GlcNAc(2)-PP-Dol alpha-1,2-glucosyltransferase that operates in the biosynthetic pathway of dolichol-linked oligosaccharides, the glycan precursors employed in protein asparagine (N)-glycosylation. The assembly of dolichol-linked oligosaccharides begins on the cytosolic side of the endoplasmic reticulum membrane and finishes in its lumen. The sequential addition of sugars to dolichol pyrophosphate produces dolichol-linked oligosaccharides containing fourteen sugars, including two GlcNAcs, nine mannoses and three glucoses. Once assembled, the oligosaccharide is transferred from the lipid to nascent proteins by oligosaccharyltransferases. In the lumen of the endoplasmic reticulum, adds the third and last glucose residue from dolichyl phosphate glucose (Dol-P-Glc) onto the lipid-linked oligosaccharide intermediate Glc(2)Man(9)GlcNAc(2)-PP-Dol to produce Glc(3)Man(9)GlcNAc(2)-PP-Dol. This is Dol-P-Glc:Glc(2)Man(9)GlcNAc(2)-PP-Dol alpha-1,2-glucosyltransferase from Homo sapiens (Human).